The sequence spans 355 residues: Protein pelota homolog (355 aa).

This sequence belongs to the eukaryotic release factor 1 family. Pelota subfamily. In terms of assembly, monomer. It depends on a divalent metal cation as a cofactor.

The protein localises to the cytoplasm. Functionally, may function in recognizing stalled ribosomes, interact with stem-loop structures in stalled mRNA molecules, and effect endonucleolytic cleavage of the mRNA. May play a role in the release non-functional ribosomes and degradation of damaged mRNAs. Has endoribonuclease activity. This is Protein pelota homolog from Halorubrum lacusprofundi (strain ATCC 49239 / DSM 5036 / JCM 8891 / ACAM 34).